Consider the following 273-residue polypeptide: HTH-type transcriptional regulator NimR (273 aa).

The region spanning 158 to 258 (PKIRTMVEMM…GQTPGRYIAR (101 aa)) is the HTH araC/xylS-type domain. DNA-binding regions (H-T-H motif) lie at residues 178-199 (GQWAGFFAMSERNLARLIVKET) and 225-248 (VQKVAHTLGYDSTTAFITMFKKGL).

Functionally, negatively regulates expression of the nimT operon and its own expression. Acts by binding to the nimR-nimT intergenic region. The sequence is that of HTH-type transcriptional regulator NimR from Escherichia coli (strain K12).